A 1760-amino-acid chain; its full sequence is Cilia- and flagella-associated protein 44 (1760 aa).

WD repeat units lie at residues 119–160 (GATK…MVLR), 163–202 (CHNT…TGLK), 213–251 (LEIS…CCFA), 276–315 (CHEG…VAEG), and 388–427 (FNGG…ELYK). The span at 1155 to 1165 (RQEEKLREQTA) shows a compositional bias: basic and acidic residues. Residues 1155–1224 (RQEEKLREQT…FGTAAARTRS (70 aa)) form a disordered region. The segment covering 1181 to 1190 (PATNTDTSGA) has biased composition (polar residues). The span at 1194–1205 (ATRRSEGEDSRK) shows a compositional bias: basic and acidic residues. A coiled-coil region spans residues 1348–1389 (YDEARNSRDRCLREMEELQRLVQDQTASIEKLQEANKVFRRE). Residues 1420–1444 (HSDMSGNDDDITSDDDDDDDMGEDE) are disordered. Positions 1425-1444 (GNDDDITSDDDDDDDMGEDE) are enriched in acidic residues.

Belongs to the CFAP44 family.

It localises to the cell projection. It is found in the cilium. The protein resides in the flagellum. The protein localises to the cytoplasm. Its subcellular location is the cytoskeleton. It localises to the flagellum axoneme. Its function is as follows. Flagellar protein involved in flagellum axoneme organization and function. In Trypanosoma brucei brucei (strain 927/4 GUTat10.1), this protein is Cilia- and flagella-associated protein 44.